A 409-amino-acid chain; its full sequence is Arginine deiminase (409 aa).

C399 acts as the Amidino-cysteine intermediate in catalysis.

The protein belongs to the arginine deiminase family.

The protein localises to the cytoplasm. It carries out the reaction L-arginine + H2O = L-citrulline + NH4(+). It functions in the pathway amino-acid degradation; L-arginine degradation via ADI pathway; carbamoyl phosphate from L-arginine: step 1/2. The polypeptide is Arginine deiminase (arcA) (Borreliella afzelii (Borrelia afzelii)).